A 65-amino-acid polypeptide reads, in one-letter code: Disintegrin VLO4 (65 aa).

The Disintegrin domain occupies 1–65; that stretch reads MNSGNPCCDP…PDCPRNPWKG (65 aa). 4 cysteine pairs are disulfide-bonded: Cys-7–Cys-30, Cys-21–Cys-27, Cys-26–Cys-51, and Cys-39–Cys-58. The short motif at 43-45 is the Cell attachment site element; that stretch reads RGD.

It belongs to the disintegrin family. Dimeric disintegrin subfamily. As to quaternary structure, homodimer; disulfide-linked. Expressed by the venom gland.

The protein localises to the secreted. Poor inhibitor of platelet aggregation. The disintegrin inhibits the adhesion of cells expressing the RGD-dependent integrin alpha-5/beta-1 (ITGA5/ITGB1) to immobilized fibronectin. Inhibition on alpha-2b/beta-3 (ITGA2B/ITGB3) is low. The polypeptide is Disintegrin VLO4 (Macrovipera lebetina obtusa (Levant blunt-nosed viper)).